Consider the following 56-residue polypeptide: Small ribosomal subunit protein uS14 (56 aa).

Zn(2+) contacts are provided by Cys-21, Cys-24, Cys-39, and Cys-42.

It belongs to the universal ribosomal protein uS14 family. It depends on Zn(2+) as a cofactor.

The sequence is that of Small ribosomal subunit protein uS14 (RPS29) from Candida glabrata (strain ATCC 2001 / BCRC 20586 / JCM 3761 / NBRC 0622 / NRRL Y-65 / CBS 138) (Yeast).